A 452-amino-acid polypeptide reads, in one-letter code: Enolase (452 aa).

Glutamine 167 lines the (2R)-2-phosphoglycerate pocket. The Proton donor role is filled by glutamate 209. Residues aspartate 250, glutamate 307, and aspartate 334 each coordinate Mg(2+). (2R)-2-phosphoglycerate is bound by residues lysine 359, arginine 388, serine 389, and lysine 410. Lysine 359 functions as the Proton acceptor in the catalytic mechanism.

This sequence belongs to the enolase family. Requires Mg(2+) as cofactor.

The protein resides in the cytoplasm. The protein localises to the secreted. It localises to the cell surface. It catalyses the reaction (2R)-2-phosphoglycerate = phosphoenolpyruvate + H2O. The protein operates within carbohydrate degradation; glycolysis; pyruvate from D-glyceraldehyde 3-phosphate: step 4/5. In terms of biological role, catalyzes the reversible conversion of 2-phosphoglycerate (2-PG) into phosphoenolpyruvate (PEP). It is essential for the degradation of carbohydrates via glycolysis. This chain is Enolase, found in Mesomycoplasma hyopneumoniae (strain 7448) (Mycoplasma hyopneumoniae).